A 389-amino-acid polypeptide reads, in one-letter code: Phosphoglycerate kinase (389 aa).

Residues 21–23, arginine 36, 59–62, arginine 112, and arginine 145 each bind substrate; these read DLN and HLGR. ATP is bound by residues lysine 196, glutamate 318, and 344-347; that span reads GGDS.

Belongs to the phosphoglycerate kinase family. Monomer.

It localises to the cytoplasm. The catalysed reaction is (2R)-3-phosphoglycerate + ATP = (2R)-3-phospho-glyceroyl phosphate + ADP. It participates in carbohydrate degradation; glycolysis; pyruvate from D-glyceraldehyde 3-phosphate: step 2/5. The protein is Phosphoglycerate kinase of Desulfovibrio desulfuricans (strain ATCC 27774 / DSM 6949 / MB).